An 88-amino-acid polypeptide reads, in one-letter code: Small ribosomal subunit protein bS20 (88 aa).

Residues 1-27 form a disordered region; the sequence is MANSKSAKKRALQSEKRRQHNASRRSM.

The protein belongs to the bacterial ribosomal protein bS20 family.

Functionally, binds directly to 16S ribosomal RNA. In Shewanella frigidimarina (strain NCIMB 400), this protein is Small ribosomal subunit protein bS20.